The sequence spans 113 residues: Regulator of rDNA transcription protein 7 (113 aa).

The next 2 helical transmembrane spans lie at 13-35 and 70-92; these read FLPIASFLTILNRILFQYWLFYN and FLLGFMVQLQSCVKLLPLYLLFL.

Its subcellular location is the membrane. In terms of biological role, identified in a screen for mutants with decreased levels of rDNA transcription. This Saccharomyces cerevisiae (strain ATCC 204508 / S288c) (Baker's yeast) protein is Regulator of rDNA transcription protein 7 (RRT7).